We begin with the raw amino-acid sequence, 61 residues long: Large ribosomal subunit protein bL28 (61 aa).

It belongs to the bacterial ribosomal protein bL28 family.

In Nocardioides sp. (strain ATCC BAA-499 / JS614), this protein is Large ribosomal subunit protein bL28.